The primary structure comprises 441 residues: Chromosome partition protein MukF (441 aa).

Positions 208 to 236 (LTETSSTLRELQDTLEAAGDKLQTSLLSI) are leucine-zipper.

This sequence belongs to the MukF family. In terms of assembly, interacts, and probably forms a ternary complex, with MukE and MukB via its C-terminal region. The complex formation is stimulated by calcium or magnesium. It is required for an interaction between MukE and MukB.

The protein localises to the cytoplasm. Its subcellular location is the nucleoid. Involved in chromosome condensation, segregation and cell cycle progression. May participate in facilitating chromosome segregation by condensation DNA from both sides of a centrally located replisome during cell division. Not required for mini-F plasmid partitioning. Probably acts via its interaction with MukB and MukE. Overexpression results in anucleate cells. It has a calcium binding activity. The protein is Chromosome partition protein MukF of Pectobacterium atrosepticum (strain SCRI 1043 / ATCC BAA-672) (Erwinia carotovora subsp. atroseptica).